A 410-amino-acid chain; its full sequence is WD repeat-containing protein jip5 (410 aa).

WD repeat units follow at residues 9 to 48 (PLSADLFAQAIHPSEPIISVGLSTGHVQTFRLPTEEEEEH), 74 to 113 (RHKGSCRTLTFGIDGEMLYSAGTDGLVKAAKAETGVVENK), 119 to 160 (AKDG…SKVA), 223 to 264 (VSST…DQDE), 273 to 316 (GGGE…VVSE), and 320 to 357 (DETEGVIGLGFDVEGHMVSGGGQIVKVWHEAADSIGGE). Positions 41-65 (PTEEEEEHSDDEQASVSSSRNGKGH) are disordered. Acidic residues predominate over residues 43–53 (EEEEEHSDDEQ). The segment at 354–410 (IGGEKRGFGGDSDDSDDDSDDSDHEPKQGDDSRRKRKKQKGKDRGKGPEIMAFADLD) is disordered. Positions 364–376 (DSDDSDDDSDDSD) are enriched in acidic residues. A compositionally biased stretch (basic and acidic residues) spans 377-386 (HEPKQGDDSR).

Belongs to the WD repeat WDR55 family.

It is found in the nucleus. The protein localises to the nucleolus. This is WD repeat-containing protein jip5 (jip5) from Emericella nidulans (strain FGSC A4 / ATCC 38163 / CBS 112.46 / NRRL 194 / M139) (Aspergillus nidulans).